Reading from the N-terminus, the 824-residue chain is FT-interacting protein 1 (824 aa).

C2 domains follow at residues tryptophan 48–tyrosine 170, valine 217–phenylalanine 341, and tyrosine 385–tyrosine 522. 3 helical membrane passes run alanine 625–tryptophan 645, leucine 657–phenylalanine 677, and alanine 764–phenylalanine 784.

This sequence belongs to the MCTP family. Interacts with RFT1 and PI4KG4. Specifically expressed in the phloem including companion cells.

Its subcellular location is the endoplasmic reticulum membrane. Involved in the export of the long day-specific flower-promoting signal (florigen) RFT1 from the phloem companion cells to sieve elements. Promotes flowering under long days through the transport of RFT1 from the leaves to the shoot apical meristem (SAM). This Oryza sativa subsp. japonica (Rice) protein is FT-interacting protein 1.